The following is a 1235-amino-acid chain: ATP-dependent helicase/nuclease subunit A (1235 aa).

The UvrD-like helicase ATP-binding domain occupies 12-482 (SLWTDDQWKA…IDLSQNFRSR (471 aa)). Residue 33 to 40 (AAAGSGKT) coordinates ATP. The 292-residue stretch at 509–800 (AAELTLGANF…RMMTIHASKG (292 aa)) folds into the UvrD-like helicase C-terminal domain.

It belongs to the helicase family. AddA subfamily. As to quaternary structure, heterodimer of AddA and AddB/RexB. It depends on Mg(2+) as a cofactor.

The catalysed reaction is Couples ATP hydrolysis with the unwinding of duplex DNA by translocating in the 3'-5' direction.. The enzyme catalyses ATP + H2O = ADP + phosphate + H(+). Functionally, the heterodimer acts as both an ATP-dependent DNA helicase and an ATP-dependent, dual-direction single-stranded exonuclease. Recognizes the chi site generating a DNA molecule suitable for the initiation of homologous recombination. The AddA nuclease domain is required for chi fragment generation; this subunit has the helicase and 3' -&gt; 5' nuclease activities. This chain is ATP-dependent helicase/nuclease subunit A, found in Listeria monocytogenes serovar 1/2a (strain ATCC BAA-679 / EGD-e).